Reading from the N-terminus, the 187-residue chain is Putative gamma-glutamylcyclotransferase At3g02910 (187 aa).

Position 17–20 (17–20) interacts with substrate; that stretch reads YGTL. The active-site Proton acceptor is the Glu-92.

This sequence belongs to the gamma-glutamylcyclotransferase family.

Putative gamma-glutamylcyclotransferase. The protein is Putative gamma-glutamylcyclotransferase At3g02910 of Arabidopsis thaliana (Mouse-ear cress).